A 625-amino-acid chain; its full sequence is Phosphomethylpyrimidine synthase (625 aa).

Residues asparagine 230, methionine 259, tyrosine 288, histidine 324, 344-346 (SRG), 385-388 (DGLR), and glutamate 424 each bind substrate. Residue histidine 428 coordinates Zn(2+). Tyrosine 451 serves as a coordination point for substrate. Histidine 492 contributes to the Zn(2+) binding site. Cysteine 572, cysteine 575, and cysteine 580 together coordinate [4Fe-4S] cluster.

It belongs to the ThiC family. As to quaternary structure, homodimer. Requires [4Fe-4S] cluster as cofactor.

The catalysed reaction is 5-amino-1-(5-phospho-beta-D-ribosyl)imidazole + S-adenosyl-L-methionine = 4-amino-2-methyl-5-(phosphooxymethyl)pyrimidine + CO + 5'-deoxyadenosine + formate + L-methionine + 3 H(+). It participates in cofactor biosynthesis; thiamine diphosphate biosynthesis. Catalyzes the synthesis of the hydroxymethylpyrimidine phosphate (HMP-P) moiety of thiamine from aminoimidazole ribotide (AIR) in a radical S-adenosyl-L-methionine (SAM)-dependent reaction. The protein is Phosphomethylpyrimidine synthase of Xanthomonas axonopodis pv. citri (strain 306).